Reading from the N-terminus, the 120-residue chain is Ribonuclease P protein component (120 aa).

It belongs to the RnpA family. In terms of assembly, consists of a catalytic RNA component (M1 or rnpB) and a protein subunit.

The catalysed reaction is Endonucleolytic cleavage of RNA, removing 5'-extranucleotides from tRNA precursor.. Functionally, RNaseP catalyzes the removal of the 5'-leader sequence from pre-tRNA to produce the mature 5'-terminus. It can also cleave other RNA substrates such as 4.5S RNA. The protein component plays an auxiliary but essential role in vivo by binding to the 5'-leader sequence and broadening the substrate specificity of the ribozyme. This is Ribonuclease P protein component from Bordetella avium (strain 197N).